Consider the following 175-residue polypeptide: MAEKRNIFLVGPMGAGKSTIGRQLAQLLNMEFIDSDNEIEQRAGADISWIFDIEGEDGFRKREERIINELTQKQGIVLSTGGGAILSKETRNHLSARGIVIYLQTTVDKQFERTQRDKKRPLLQGVEDVRKVLEDLAQVRNPLYEEVADITLPTDEQSAKLMASHIVELIDNFNS.

14–19 (GAGKST) provides a ligand contact to ATP. Position 18 (S18) interacts with Mg(2+). Residues D36, R60, and G82 each coordinate substrate. Residue R120 participates in ATP binding. R140 contacts substrate. Residue Q157 coordinates ATP.

The protein belongs to the shikimate kinase family. In terms of assembly, monomer. Requires Mg(2+) as cofactor.

It is found in the cytoplasm. It carries out the reaction shikimate + ATP = 3-phosphoshikimate + ADP + H(+). It functions in the pathway metabolic intermediate biosynthesis; chorismate biosynthesis; chorismate from D-erythrose 4-phosphate and phosphoenolpyruvate: step 5/7. Functionally, catalyzes the specific phosphorylation of the 3-hydroxyl group of shikimic acid using ATP as a cosubstrate. This chain is Shikimate kinase, found in Mannheimia succiniciproducens (strain KCTC 0769BP / MBEL55E).